Here is a 528-residue protein sequence, read N- to C-terminus: Probable methylmalonate-semialdehyde/malonate-semialdehyde dehydrogenase [acylating], mitochondrial (528 aa).

The N-terminal 26 residues, 1 to 26, are a transit peptide targeting the mitochondrion; sequence MLSFKFAKSASKVIGNRNFHSSSASL. F175, K199, E202, and R203 together coordinate NAD(+). The active-site Nucleophile is C307. An NAD(+)-binding site is contributed by E408.

The protein belongs to the aldehyde dehydrogenase family. As to quaternary structure, homotetramer.

The protein localises to the mitochondrion. It catalyses the reaction 2-methyl-3-oxopropanoate + NAD(+) + CoA + H2O = propanoyl-CoA + hydrogencarbonate + NADH + H(+). The catalysed reaction is 3-oxopropanoate + NAD(+) + CoA + H2O = hydrogencarbonate + acetyl-CoA + NADH + H(+). Its function is as follows. Probable malonate and methylmalonate semialdehyde dehydrogenase involved in the catabolism of valine, thymine, and compounds catabolized by way of beta-alanine, including uracil and cytidine. The sequence is that of Probable methylmalonate-semialdehyde/malonate-semialdehyde dehydrogenase [acylating], mitochondrial (mmsdh) from Dictyostelium discoideum (Social amoeba).